The following is a 348-amino-acid chain: GTPase Obg (348 aa).

The region spanning 1-159 (MKFVDEVKVH…RELVLELKLM (159 aa)) is the Obg domain. The OBG-type G domain maps to 160 to 331 (ADVGLVGLPN…LLSALVRILS (172 aa)). GTP is bound by residues 166-173 (GLPNAGKS), 191-195 (FTTLI), 213-216 (DIPG), 283-286 (NKVD), and 312-314 (SAR). Mg(2+)-binding residues include serine 173 and threonine 193.

Belongs to the TRAFAC class OBG-HflX-like GTPase superfamily. OBG GTPase family. In terms of assembly, monomer. Mg(2+) is required as a cofactor.

It is found in the cytoplasm. Functionally, an essential GTPase which binds GTP, GDP and possibly (p)ppGpp with moderate affinity, with high nucleotide exchange rates and a fairly low GTP hydrolysis rate. Plays a role in control of the cell cycle, stress response, ribosome biogenesis and in those bacteria that undergo differentiation, in morphogenesis control. The sequence is that of GTPase Obg from Syntrophobacter fumaroxidans (strain DSM 10017 / MPOB).